Here is a 198-residue protein sequence, read N- to C-terminus: Recombination protein RecR (198 aa).

The C4-type zinc-finger motif lies at 56-71 (CGVCGNVDTSNPCGIC). The Toprim domain maps to 79–174 (RSICVVEEVA…RVTQLAHGLP (96 aa)).

It belongs to the RecR family.

May play a role in DNA repair. It seems to be involved in an RecBC-independent recombinational process of DNA repair. It may act with RecF and RecO. The polypeptide is Recombination protein RecR (Novosphingobium aromaticivorans (strain ATCC 700278 / DSM 12444 / CCUG 56034 / CIP 105152 / NBRC 16084 / F199)).